The following is a 74-amino-acid chain: uncharacterized protein (74 aa).

A helical membrane pass occupies residues 20 to 40; the sequence is IYSYTLLTLLVITLICYLIHI.

Belongs to the asfivirus KP93L family.

It is found in the host membrane. This is an uncharacterized protein from African swine fever virus (isolate Tick/South Africa/Pretoriuskop Pr4/1996) (ASFV).